The sequence spans 524 residues: Chromosomal replication initiator protein DnaA (524 aa).

The tract at residues 1-72 (MNDFWQHCSA…DLARDFWNAP (72 aa)) is domain I, interacts with DnaA modulators. The tract at residues 72-187 (PIEVQFVLDP…GEADSMYERS (116 aa)) is domain II. The domain III, AAA+ region stretch occupies residues 188 to 404 (KLNPVLTFDN…GALRKILAYS (217 aa)). Residues Gly-232, Gly-234, Lys-235, and Thr-236 each coordinate ATP. The segment at 405 to 524 (KFHGREISIE…LHVLEQTLKG (120 aa)) is domain IV, binds dsDNA.

The protein belongs to the DnaA family. In terms of assembly, oligomerizes as a right-handed, spiral filament on DNA at oriC.

The protein localises to the cytoplasm. Its function is as follows. Plays an essential role in the initiation and regulation of chromosomal replication. ATP-DnaA binds to the origin of replication (oriC) to initiate formation of the DNA replication initiation complex once per cell cycle. Binds the DnaA box (a 9 base pair repeat at the origin) and separates the double-stranded (ds)DNA. Forms a right-handed helical filament on oriC DNA; dsDNA binds to the exterior of the filament while single-stranded (ss)DNA is stabiized in the filament's interior. The ATP-DnaA-oriC complex binds and stabilizes one strand of the AT-rich DNA unwinding element (DUE), permitting loading of DNA polymerase. After initiation quickly degrades to an ADP-DnaA complex that is not apt for DNA replication. Binds acidic phospholipids. This chain is Chromosomal replication initiator protein DnaA, found in Burkholderia multivorans (strain ATCC 17616 / 249).